Reading from the N-terminus, the 450-residue chain is tRNA modification GTPase MnmE (450 aa).

Arginine 24, glutamate 82, and lysine 121 together coordinate (6S)-5-formyl-5,6,7,8-tetrahydrofolate. The TrmE-type G domain occupies 218–375 (GMHVVLVGQP…LRQVLLEAVG (158 aa)). Asparagine 228 provides a ligand contact to K(+). GTP contacts are provided by residues 228–233 (NVGKSS), 247–253 (TDIAGTT), 272–275 (DTAG), and 356–358 (SAR). Position 232 (serine 232) interacts with Mg(2+). Residues threonine 247, isoleucine 249, and threonine 252 each contribute to the K(+) site. Threonine 253 is a binding site for Mg(2+). Lysine 450 serves as a coordination point for (6S)-5-formyl-5,6,7,8-tetrahydrofolate.

Belongs to the TRAFAC class TrmE-Era-EngA-EngB-Septin-like GTPase superfamily. TrmE GTPase family. In terms of assembly, homodimer. Heterotetramer of two MnmE and two MnmG subunits. It depends on K(+) as a cofactor.

It is found in the cytoplasm. In terms of biological role, exhibits a very high intrinsic GTPase hydrolysis rate. Involved in the addition of a carboxymethylaminomethyl (cmnm) group at the wobble position (U34) of certain tRNAs, forming tRNA-cmnm(5)s(2)U34. This Laribacter hongkongensis (strain HLHK9) protein is tRNA modification GTPase MnmE.